We begin with the raw amino-acid sequence, 400 residues long: Formate-dependent phosphoribosylglycinamide formyltransferase (400 aa).

N(1)-(5-phospho-beta-D-ribosyl)glycinamide contacts are provided by residues 22 to 23 and Glu-82; that span reads EL. ATP is bound by residues Arg-115, Lys-157, 162 to 167, 197 to 200, and Glu-205; these read SSGKGQ and EGFV. The ATP-grasp domain occupies 120–315; sequence RLAAETLGLP…EFELHARAIL (196 aa). Mg(2+) is bound by residues Glu-274 and Glu-286. N(1)-(5-phospho-beta-D-ribosyl)glycinamide is bound by residues Asp-293, Lys-362, and 369-370; that span reads RR.

It belongs to the PurK/PurT family. As to quaternary structure, homodimer.

It catalyses the reaction N(1)-(5-phospho-beta-D-ribosyl)glycinamide + formate + ATP = N(2)-formyl-N(1)-(5-phospho-beta-D-ribosyl)glycinamide + ADP + phosphate + H(+). It functions in the pathway purine metabolism; IMP biosynthesis via de novo pathway; N(2)-formyl-N(1)-(5-phospho-D-ribosyl)glycinamide from N(1)-(5-phospho-D-ribosyl)glycinamide (formate route): step 1/1. Its function is as follows. Involved in the de novo purine biosynthesis. Catalyzes the transfer of formate to 5-phospho-ribosyl-glycinamide (GAR), producing 5-phospho-ribosyl-N-formylglycinamide (FGAR). Formate is provided by PurU via hydrolysis of 10-formyl-tetrahydrofolate. The protein is Formate-dependent phosphoribosylglycinamide formyltransferase of Mycolicibacterium gilvum (strain PYR-GCK) (Mycobacterium gilvum (strain PYR-GCK)).